A 131-amino-acid chain; its full sequence is D-ribose pyranase (131 aa).

The active-site Proton donor is the His20. Residues Asp28, His98, and 120–122 (YAN) each bind substrate.

The protein belongs to the RbsD / FucU family. RbsD subfamily. Homodecamer.

It localises to the cytoplasm. The enzyme catalyses beta-D-ribopyranose = beta-D-ribofuranose. The protein operates within carbohydrate metabolism; D-ribose degradation; D-ribose 5-phosphate from beta-D-ribopyranose: step 1/2. Functionally, catalyzes the interconversion of beta-pyran and beta-furan forms of D-ribose. The protein is D-ribose pyranase of Clostridium novyi (strain NT).